Reading from the N-terminus, the 1291-residue chain is DNA-directed RNA polymerase subunit beta (1291 aa).

The protein belongs to the RNA polymerase beta chain family. As to quaternary structure, the RNAP catalytic core consists of 2 alpha, 1 beta, 1 beta' and 1 omega subunit. When a sigma factor is associated with the core the holoenzyme is formed, which can initiate transcription.

The catalysed reaction is RNA(n) + a ribonucleoside 5'-triphosphate = RNA(n+1) + diphosphate. In terms of biological role, DNA-dependent RNA polymerase catalyzes the transcription of DNA into RNA using the four ribonucleoside triphosphates as substrates. In Mycoplasma mycoides subsp. mycoides SC (strain CCUG 32753 / NCTC 10114 / PG1), this protein is DNA-directed RNA polymerase subunit beta.